A 600-amino-acid chain; its full sequence is DNA mismatch repair protein MutL (600 aa).

Belongs to the DNA mismatch repair MutL/HexB family.

Functionally, this protein is involved in the repair of mismatches in DNA. It is required for dam-dependent methyl-directed DNA mismatch repair. May act as a 'molecular matchmaker', a protein that promotes the formation of a stable complex between two or more DNA-binding proteins in an ATP-dependent manner without itself being part of a final effector complex. This Rickettsia typhi (strain ATCC VR-144 / Wilmington) protein is DNA mismatch repair protein MutL.